The following is a 431-amino-acid chain: Protein EARLY STARVATION 1, chloroplastic (431 aa).

The transit peptide at 1–19 (MAACSRGLVARPFDLTARG) directs the protein to the chloroplast. Disordered stretches follow at residues 65–126 (GNKP…DTGI) and 403–431 (GVYP…SPLE). Pro residues predominate over residues 415–431 (PAPPSDDPPGMPPSPLE).

The protein belongs to the ESV1 family.

It is found in the plastid. The protein resides in the chloroplast stroma. In terms of biological role, binds preferentially to highly ordered alpha-glucans, such as starch and crystalline maltodextrins. Involved in the organization of the starch granule matrix, thus influencing starch turnover by modulating the accessibility of starch polymers to modifying and degrading enzymes. Required for the control of starch degradation in leaves and starch distribution in nonphotosynthetic parts. Promotes gravitropic responses, negative in shoots but positive in roots, by facilitating starch granules (statoliths) formation in hypocotyls and roots columella. Facilitates tight packing of starch granules in grains. This is Protein EARLY STARVATION 1, chloroplastic from Oryza sativa subsp. japonica (Rice).